The chain runs to 239 residues: Fatty acid metabolism regulator protein (239 aa).

The region spanning 6 to 74 is the HTH gntR-type domain; that stretch reads KGPASFAEKY…HGKPTQVNNF (69 aa). Positions 34-53 form a DNA-binding region, H-T-H motif; the sequence is ERELSELIGVTRTTLREVLQ.

As to quaternary structure, homodimer.

The protein resides in the cytoplasm. Multifunctional regulator of fatty acid metabolism. The polypeptide is Fatty acid metabolism regulator protein (Shewanella frigidimarina (strain NCIMB 400)).